Here is a 397-residue protein sequence, read N- to C-terminus: uncharacterized protein (397 aa).

Helical transmembrane passes span M1–V21, V39–F59, E76–P96, V103–A123, A124–A144, M194–F214, A219–L239, L255–L275, and Q301–A321.

The protein belongs to the TerC family.

It localises to the cell membrane. This is an uncharacterized protein from Mycobacterium tuberculosis (strain CDC 1551 / Oshkosh).